The following is a 184-amino-acid chain: Lactoylglutathione lyase (184 aa).

Ala-2 bears the N-acetylalanine mark. Cys-19 and Cys-20 form a disulfide bridge. In terms of domain architecture, VOC spans 31-177; sequence LLQQTMLRVK…DGYWIEILNP (147 aa). 2 residues coordinate substrate: Gln-34 and Arg-38. Gln-34 contributes to the Zn(2+) binding site. Cys-61 and Cys-139 are disulfide-bonded. Lys-88 is subject to N6-succinyllysine. Position 100 (Glu-100) interacts with Zn(2+). Substrate is bound at residue Asn-104. Thr-107 carries the post-translational modification Phosphothreonine. 2 residues coordinate substrate: Arg-123 and His-127. His-127 contacts Zn(2+). An S-glutathionyl cysteine; alternate modification is found at Cys-139. Lys-148 is modified (N6-acetyllysine; alternate). Lys-148 is subject to N6-succinyllysine; alternate. 157-158 is a binding site for substrate; the sequence is KM. Residue Glu-173 participates in Zn(2+) binding. Glu-173 acts as the Proton donor/acceptor in catalysis.

Belongs to the glyoxalase I family. As to quaternary structure, homodimer. Zn(2+) serves as cofactor. Post-translationally, glutathionylation at Cys-139 inhibits enzyme activity. Phosphorylated at Thr-107 in the presence of CaMK2. However, this is a consensus site for phosphorylation by CK2 so phosphorylation may be mediated by CK2 rather than CaMK2. Phosphorylation is induced by TNF and suppresses the TNF-induced transcriptional activity of NF-kappa-B. In terms of processing, exists in a nitric oxide (NO)-modified form. The exact nature of the modification is unknown, but it suppresses the TNF-induced transcriptional activity of NF-kappa-B.

It catalyses the reaction (R)-S-lactoylglutathione = methylglyoxal + glutathione. It functions in the pathway secondary metabolite metabolism; methylglyoxal degradation; (R)-lactate from methylglyoxal: step 1/2. Regulated by oxidation of Cys-139 in response to the redox state of the cell. Results in the alternative formation of cystine or glutathione-bound cysteine, the latter modification leading to reduced enzyme activity. Catalyzes the conversion of hemimercaptal, formed from methylglyoxal and glutathione, to S-lactoylglutathione. Involved in the regulation of TNF-induced transcriptional activity of NF-kappa-B. Required for normal osteoclastogenesis. The polypeptide is Lactoylglutathione lyase (GLO1) (Homo sapiens (Human)).